A 66-amino-acid polypeptide reads, in one-letter code: Large ribosomal subunit protein bL35 (66 aa).

The tract at residues 21-40 (KIKSTQSAKRHGMTKRSKRS) is disordered. Residues 28-40 (AKRHGMTKRSKRS) are compositionally biased toward basic residues.

Belongs to the bacterial ribosomal protein bL35 family.

The protein is Large ribosomal subunit protein bL35 of Ehrlichia canis (strain Jake).